We begin with the raw amino-acid sequence, 102 residues long: Putative pterin-4-alpha-carbinolamine dehydratase (102 aa).

The protein belongs to the pterin-4-alpha-carbinolamine dehydratase family.

It carries out the reaction (4aS,6R)-4a-hydroxy-L-erythro-5,6,7,8-tetrahydrobiopterin = (6R)-L-erythro-6,7-dihydrobiopterin + H2O. The protein is Putative pterin-4-alpha-carbinolamine dehydratase of Burkholderia multivorans (strain ATCC 17616 / 249).